The primary structure comprises 128 residues: Large ribosomal subunit protein bL17 (128 aa).

The protein belongs to the bacterial ribosomal protein bL17 family. In terms of assembly, part of the 50S ribosomal subunit. Contacts protein L32.

The sequence is that of Large ribosomal subunit protein bL17 from Streptococcus gordonii (strain Challis / ATCC 35105 / BCRC 15272 / CH1 / DL1 / V288).